The chain runs to 763 residues: Pentatricopeptide repeat-containing protein At4g32430, mitochondrial (763 aa).

Residues 1-38 (MTLLNYLHCNRSKSFLFQRFYSPYRIAHKLFDGSSQRN) constitute a mitochondrion transit peptide. PPR repeat units lie at residues 77-109 (DEVT…GFTS), 110-140 (FVCV…LVDP), 141-172 (DVVS…GVVF), 173-207 (DAFT…GLES), 208-238 (DLVV…MSFK), 239-274 (DMIS…GVEL), 275-309 (DHVS…GYES), 310-344 (LLEV…NVVS), 350-370 (SSNK…GVYP), 371-405 (NEVT…GFVS), 406-436 (EPSV…ITFR), 437-471 (EIIS…TMPN), 472-507 (EYTF…GLNS), 508-538 (CPVV…MSQK), 539-573 (NQFV…NVAP), 574-604 (DLVT…MIEV), and 610-640 (SHEH…VPGG). The interval 645-720 (MLQSMLGSCR…EAGFSWIDVG (76 aa)) is type E motif. Residues 724–756 (GSLTMQGFSSGDKSHPKSDEIYRMVEIIGLEMN) are type E(+) motif.

Belongs to the PPR family. PCMP-E subfamily.

The protein resides in the mitochondrion. In Arabidopsis thaliana (Mouse-ear cress), this protein is Pentatricopeptide repeat-containing protein At4g32430, mitochondrial (PCMP-E40).